We begin with the raw amino-acid sequence, 209 residues long: Glycolipid transfer protein A (209 aa).

2 consecutive repeat copies span residues 45 to 55 (IKADITGNITK) and 56 to 66 (IRSVYESNPTK). Residues 45–66 (IKADITGNITKIRSVYESNPTK) form a 2 X 12 AA approximate tandem repeats region. 48–55 (DITGNITK) contributes to the beta-D-galactosyl-(1-&gt;4)-beta-D-glucosyl-(1&lt;-&gt;1)-N-[(9Z)-octadecenoyl]-sphing-4-enine binding site. Residues His-140 and Tyr-207 each contribute to the beta-D-galactosyl-(1-&gt;4)-beta-D-glucosyl-(1&lt;-&gt;1)-N-[(9Z)-octadecenoyl]-sphing-4-enine site.

It belongs to the GLTP family.

It is found in the cytoplasm. In terms of biological role, accelerates the intermembrane transfer of various glycolipids. Catalyzes the transfer of various glycosphingolipids between membranes but does not catalyze the transfer of phospholipids. May be involved in the intracellular translocation of glucosylceramides. This is Glycolipid transfer protein A (gltp-a) from Xenopus laevis (African clawed frog).